The chain runs to 102 residues: Synaptobrevin-like protein 5 (102 aa).

The 61-residue stretch at lysine 17 to lysine 77 folds into the v-SNARE coiled-coil homology domain.

In Caenorhabditis elegans, this protein is Synaptobrevin-like protein 5 (snb-5).